Here is a 364-residue protein sequence, read N- to C-terminus: Peptide chain release factor 2 (364 aa).

Q251 carries the N5-methylglutamine modification.

Belongs to the prokaryotic/mitochondrial release factor family. Methylated by PrmC. Methylation increases the termination efficiency of RF2.

The protein localises to the cytoplasm. In terms of biological role, peptide chain release factor 2 directs the termination of translation in response to the peptide chain termination codons UGA and UAA. This chain is Peptide chain release factor 2, found in Campylobacter hominis (strain ATCC BAA-381 / DSM 21671 / CCUG 45161 / LMG 19568 / NCTC 13146 / CH001A).